The chain runs to 414 residues: STAGA complex 65 subunit gamma (414 aa).

The tract at residues 87–108 (NQQQTEGVKTEESEPLPSCPGS) is disordered. Residue serine 108 is modified to Phosphoserine. A Glycyl lysine isopeptide (Lys-Gly) (interchain with G-Cter in SUMO2) cross-link involves residue lysine 271. A phosphoserine mark is found at serine 323 and serine 334. The disordered stretch occupies residues 346-414 (PQESEEGNVS…QRCKKRMRKI (69 aa)). Positions 386-395 (SSYGSHSTDS) are enriched in low complexity.

As to quaternary structure, component of the STAGA transcription coactivator-HAT complex, at least composed of SUPT3H, SUPT7L, GCN5L2, TAF5L, TAF6L, TADA3L, TAD1L, TAF10, TAF12 and TAF9. Post-translationally, sumoylated. As to expression, expressed at high levels in adenocarcinomas and gliomas and low in esophageal cancers and malignant hematological disease. Also expressed at high level in the thymus, low in peripheral blood mononuclear cells, and lowest in the stomach, small intestine, and skeletal muscle.

It is found in the nucleus. The sequence is that of STAGA complex 65 subunit gamma (SUPT7L) from Homo sapiens (Human).